We begin with the raw amino-acid sequence, 910 residues long: Protein translocase subunit SecA (910 aa).

Residues Q86, 104–108 (GEGKT), and D499 each bind ATP. C894, C896, C905, and H906 together coordinate Zn(2+).

The protein belongs to the SecA family. Monomer and homodimer. Part of the essential Sec protein translocation apparatus which comprises SecA, SecYEG and auxiliary proteins SecDF-YajC and YidC. It depends on Zn(2+) as a cofactor.

It is found in the cell inner membrane. The protein localises to the cytoplasm. It carries out the reaction ATP + H2O + cellular proteinSide 1 = ADP + phosphate + cellular proteinSide 2.. Its function is as follows. Part of the Sec protein translocase complex. Interacts with the SecYEG preprotein conducting channel. Has a central role in coupling the hydrolysis of ATP to the transfer of proteins into and across the cell membrane, serving both as a receptor for the preprotein-SecB complex and as an ATP-driven molecular motor driving the stepwise translocation of polypeptide chains across the membrane. In Rickettsia bellii (strain RML369-C), this protein is Protein translocase subunit SecA.